Reading from the N-terminus, the 268-residue chain is Purine nucleoside phosphorylase (268 aa).

Phosphate-binding positions include serine 36, histidine 68, 88–90 (RIH), and alanine 120. Glutamate 189 contributes to the a purine D-ribonucleoside binding site. Residue serine 208 coordinates phosphate. Asparagine 231 contacts a purine D-ribonucleoside.

The protein belongs to the PNP/MTAP phosphorylase family. Homotrimer.

The catalysed reaction is a purine 2'-deoxy-D-ribonucleoside + phosphate = a purine nucleobase + 2-deoxy-alpha-D-ribose 1-phosphate. Its pathway is purine metabolism; purine nucleoside salvage. The purine nucleoside phosphorylases catalyze the phosphorolytic breakdown of the N-glycosidic bond in the beta-(deoxy)ribonucleoside molecules, with the formation of the corresponding free purine bases and pentose-1-phosphate. Cleaves guanosine, inosine, 2'-deoxyguanosine and 2'-deoxyinosine. The sequence is that of Purine nucleoside phosphorylase (punA) from Mycobacterium bovis (strain ATCC BAA-935 / AF2122/97).